Reading from the N-terminus, the 199-residue chain is Prolactin (199 aa).

C4 and C11 are joined by a disulfide. Residue S26 is modified to Phosphoserine. The N-linked (GlcNAc...) asparagine; partial glycan is linked to N31. Phosphoserine is present on residues S34 and S90. 2 disulfides stabilise this stretch: C58-C174 and C191-C199.

This sequence belongs to the somatotropin/prolactin family. Interacts with PRLR.

The protein resides in the secreted. Functionally, prolactin acts primarily on the mammary gland by promoting lactation. This Camelus dromedarius (Dromedary) protein is Prolactin (PRL).